The following is a 260-amino-acid chain: Indole-3-glycerol phosphate synthase (260 aa).

Belongs to the TrpC family.

The catalysed reaction is 1-(2-carboxyphenylamino)-1-deoxy-D-ribulose 5-phosphate + H(+) = (1S,2R)-1-C-(indol-3-yl)glycerol 3-phosphate + CO2 + H2O. It functions in the pathway amino-acid biosynthesis; L-tryptophan biosynthesis; L-tryptophan from chorismate: step 4/5. The polypeptide is Indole-3-glycerol phosphate synthase (Koribacter versatilis (strain Ellin345)).